Reading from the N-terminus, the 85-residue chain is UPF0291 protein SP_1473 (85 aa).

The tract at residues Thr62–Ser85 is disordered.

It belongs to the UPF0291 family.

The protein resides in the cytoplasm. The polypeptide is UPF0291 protein SP_1473 (Streptococcus pneumoniae serotype 4 (strain ATCC BAA-334 / TIGR4)).